Consider the following 109-residue polypeptide: Putative double-stranded DNA mimic protein YciU (109 aa).

Belongs to the putative dsDNA mimic protein family.

Its function is as follows. May act as a double-stranded DNA (dsDNA) mimic. Probably regulates the activity of a dsDNA-binding protein. The chain is Putative double-stranded DNA mimic protein YciU from Salmonella choleraesuis (strain SC-B67).